A 216-amino-acid polypeptide reads, in one-letter code: Somatotropin (216 aa).

The first 26 residues, 1-26, serve as a signal peptide directing secretion; the sequence is MAAGPRNSVLLAFALLCLPWPQEVGT. Residue histidine 45 participates in Zn(2+) binding. Cysteine 78 and cysteine 189 form a disulfide bridge. At serine 131 the chain carries Phosphoserine. Residue glutamate 198 participates in Zn(2+) binding. Cysteine 206 and cysteine 214 are disulfide-bonded.

The protein belongs to the somatotropin/prolactin family.

It is found in the secreted. Its function is as follows. Plays an important role in growth control. Its major role in stimulating body growth is to stimulate the liver and other tissues to secrete IGF1. It stimulates both the differentiation and proliferation of myoblasts. It also stimulates amino acid uptake and protein synthesis in muscle and other tissues. This Felis catus (Cat) protein is Somatotropin (GH1).